The primary structure comprises 325 residues: Zinc finger C2HC domain-containing protein 1A (325 aa).

A C2HC/C3H-type 1 zinc finger spans residues 15–44 (ELLPCKICGRTFFPVALKKHGPICQKTATK). C19, C22, H34, and C38 together coordinate Zn(2+). Residues 43 to 83 (TKKRKTFDSSRQRAEGTDIPTVKPLKPRPEPPKKPSNWRRK) form a disordered region. The span at 48–58 (TFDSSRQRAEG) shows a compositional bias: basic and acidic residues. The C2HC/C3H-type 2 zinc finger occupies 118-147 (DYIQCPYCQRRFNENAADRHINFCKEQAAR). Zn(2+) contacts are provided by C122, C125, H137, and C141. The segment at 150 to 260 (NKGKFSTDTK…NPAPGVLTNK (111 aa)) is disordered. Composition is skewed to low complexity over residues 177–188 (SNSPGTASSGSS) and 197–216 (GKTV…SSLG). Phosphoserine is present on S223. T244 carries the post-translational modification Phosphothreonine. S292 bears the Phosphoserine mark.

This sequence belongs to the ZC2HC1 family. Zn(2+) is required as a cofactor.

The sequence is that of Zinc finger C2HC domain-containing protein 1A (ZC2HC1A) from Homo sapiens (Human).